Consider the following 216-residue polypeptide: RNA pyrophosphohydrolase (216 aa).

The region spanning 6–149 (GFRPNVGIIL…KRDVYQLALT (144 aa)) is the Nudix hydrolase domain. The Nudix box signature appears at 38 to 59 (GGIKYGETPMQAMYRELHEETG). The disordered stretch occupies residues 159-180 (AQRTDKSRGPRAPRYPRVSNGH).

This sequence belongs to the Nudix hydrolase family. RppH subfamily. It depends on a divalent metal cation as a cofactor.

Accelerates the degradation of transcripts by removing pyrophosphate from the 5'-end of triphosphorylated RNA, leading to a more labile monophosphorylated state that can stimulate subsequent ribonuclease cleavage. The sequence is that of RNA pyrophosphohydrolase from Burkholderia thailandensis (strain ATCC 700388 / DSM 13276 / CCUG 48851 / CIP 106301 / E264).